The sequence spans 399 residues: Elongation factor Tu (399 aa).

Residues 10–209 (KPHVNIGTIG…AVDEYIPTPE (200 aa)) form the tr-type G domain. The tract at residues 19–26 (GHVDHGKT) is G1. 19 to 26 (GHVDHGKT) lines the GTP pocket. Residue Thr26 participates in Mg(2+) binding. The tract at residues 60–64 (GITIA) is G2. Residues 81 to 84 (DCPG) form a G3 region. GTP contacts are provided by residues 81 to 85 (DCPGH) and 136 to 139 (NKED). The G4 stretch occupies residues 136–139 (NKED). The G5 stretch occupies residues 174–176 (SAL).

It belongs to the TRAFAC class translation factor GTPase superfamily. Classic translation factor GTPase family. EF-Tu/EF-1A subfamily. As to quaternary structure, monomer.

It is found in the cytoplasm. It carries out the reaction GTP + H2O = GDP + phosphate + H(+). GTP hydrolase that promotes the GTP-dependent binding of aminoacyl-tRNA to the A-site of ribosomes during protein biosynthesis. The protein is Elongation factor Tu of Nitratiruptor sp. (strain SB155-2).